Here is a 268-residue protein sequence, read N- to C-terminus: 4-hydroxy-tetrahydrodipicolinate reductase (268 aa).

8–13 provides a ligand contact to NAD(+); the sequence is GAAGRM. Arginine 36 contacts NADP(+). NAD(+)-binding positions include 99–101 and 123–126; these read GTT and AANF. Residue histidine 156 is the Proton donor/acceptor of the active site. Residue histidine 157 participates in (S)-2,3,4,5-tetrahydrodipicolinate binding. Lysine 160 serves as the catalytic Proton donor. A (S)-2,3,4,5-tetrahydrodipicolinate-binding site is contributed by 166 to 167; sequence GT.

The protein belongs to the DapB family.

The protein resides in the cytoplasm. The enzyme catalyses (S)-2,3,4,5-tetrahydrodipicolinate + NAD(+) + H2O = (2S,4S)-4-hydroxy-2,3,4,5-tetrahydrodipicolinate + NADH + H(+). It catalyses the reaction (S)-2,3,4,5-tetrahydrodipicolinate + NADP(+) + H2O = (2S,4S)-4-hydroxy-2,3,4,5-tetrahydrodipicolinate + NADPH + H(+). It functions in the pathway amino-acid biosynthesis; L-lysine biosynthesis via DAP pathway; (S)-tetrahydrodipicolinate from L-aspartate: step 4/4. Its function is as follows. Catalyzes the conversion of 4-hydroxy-tetrahydrodipicolinate (HTPA) to tetrahydrodipicolinate. This chain is 4-hydroxy-tetrahydrodipicolinate reductase, found in Pseudomonas fluorescens (strain ATCC BAA-477 / NRRL B-23932 / Pf-5).